We begin with the raw amino-acid sequence, 232 residues long: 5'-methylthioadenosine/S-adenosylhomocysteine nucleosidase (232 aa).

The active-site Proton acceptor is the E12. Substrate is bound by residues G78, I152, and 173–174; that span reads ME. Catalysis depends on D197, which acts as the Proton donor.

The protein belongs to the PNP/UDP phosphorylase family. MtnN subfamily. Homodimer.

It carries out the reaction S-adenosyl-L-homocysteine + H2O = S-(5-deoxy-D-ribos-5-yl)-L-homocysteine + adenine. The catalysed reaction is S-methyl-5'-thioadenosine + H2O = 5-(methylsulfanyl)-D-ribose + adenine. It catalyses the reaction 5'-deoxyadenosine + H2O = 5-deoxy-D-ribose + adenine. The protein operates within amino-acid biosynthesis; L-methionine biosynthesis via salvage pathway; S-methyl-5-thio-alpha-D-ribose 1-phosphate from S-methyl-5'-thioadenosine (hydrolase route): step 1/2. Functionally, catalyzes the irreversible cleavage of the glycosidic bond in both 5'-methylthioadenosine (MTA) and S-adenosylhomocysteine (SAH/AdoHcy) to adenine and the corresponding thioribose, 5'-methylthioribose and S-ribosylhomocysteine, respectively. Also cleaves 5'-deoxyadenosine, a toxic by-product of radical S-adenosylmethionine (SAM) enzymes, into 5-deoxyribose and adenine. Thus, is required for in vivo function of the radical SAM enzymes biotin synthase and lipoic acid synthase, that are inhibited by 5'-deoxyadenosine accumulation. The sequence is that of 5'-methylthioadenosine/S-adenosylhomocysteine nucleosidase from Salmonella paratyphi A (strain ATCC 9150 / SARB42).